We begin with the raw amino-acid sequence, 363 residues long: 3-isopropylmalate dehydrogenase (363 aa).

78–91 is an NAD(+) binding site; it reads GPKWEHLPPDQQPE. 4 residues coordinate substrate: arginine 99, arginine 109, arginine 138, and aspartate 227. The Mg(2+) site is built by aspartate 227, aspartate 251, and aspartate 255. 285 to 297 is an NAD(+) binding site; it reads GSAPDIAGKNIAN.

Belongs to the isocitrate and isopropylmalate dehydrogenases family. LeuB type 1 subfamily. In terms of assembly, homodimer. The cofactor is Mg(2+). Mn(2+) is required as a cofactor.

The protein localises to the cytoplasm. It carries out the reaction (2R,3S)-3-isopropylmalate + NAD(+) = 4-methyl-2-oxopentanoate + CO2 + NADH. Its pathway is amino-acid biosynthesis; L-leucine biosynthesis; L-leucine from 3-methyl-2-oxobutanoate: step 3/4. Its function is as follows. Catalyzes the oxidation of 3-carboxy-2-hydroxy-4-methylpentanoate (3-isopropylmalate) to 3-carboxy-4-methyl-2-oxopentanoate. The product decarboxylates to 4-methyl-2 oxopentanoate. This is 3-isopropylmalate dehydrogenase from Shigella sonnei (strain Ss046).